Reading from the N-terminus, the 24-residue chain is Large ribosomal subunit protein uL30 (24 aa).

The protein belongs to the universal ribosomal protein uL30 family. As to quaternary structure, part of the 50S ribosomal subunit.

The sequence is that of Large ribosomal subunit protein uL30 (rpmD) from Ectopseudomonas mendocina (Pseudomonas mendocina).